The chain runs to 285 residues: RING finger protein 223 (285 aa).

The segment at 81-132 (CSICFSGYDNIFKTPKELSCSHVFCLECLARLAAAQPAGRSGREAVPCPFCR) adopts an RING-type zinc-finger fold. Residues 230–250 (VALVSVLLLVLFCVILWPVQC) traverse the membrane as a helical segment.

It localises to the membrane. The protein is RING finger protein 223 (Rnf223) of Mus musculus (Mouse).